Consider the following 287-residue polypeptide: Inorganic pyrophosphatase (287 aa).

A diphosphate-binding site is contributed by arginine 79. Residues aspartate 116, aspartate 121, and aspartate 153 each contribute to the Mg(2+) site.

Belongs to the PPase family. Mg(2+) is required as a cofactor.

The protein resides in the cytoplasm. It carries out the reaction diphosphate + H2O = 2 phosphate + H(+). The chain is Inorganic pyrophosphatase (IPP1) from Eremothecium gossypii (strain ATCC 10895 / CBS 109.51 / FGSC 9923 / NRRL Y-1056) (Yeast).